Here is a 393-residue protein sequence, read N- to C-terminus: Putative N(4)-(beta-N-acetylglucosaminyl)-L-asparaginase CG1827 (393 aa).

An N-terminal signal peptide occupies residues 1 to 23 (MRRHLRASLWILCLATMAFSILA). N-linked (GlcNAc...) asparagine glycosylation is found at asparagine 49 and asparagine 64. Intrachain disulfides connect cysteine 97/cysteine 102 and cysteine 196/cysteine 212. The active-site Nucleophile is threonine 243. Residues 271–274 (RVGD) and 294–297 (TGDG) each bind substrate. A disulfide bond links cysteine 354 and cysteine 381.

Belongs to the Ntn-hydrolase family. As to quaternary structure, heterotetramer of two alpha and two beta chains arranged as a dimer of alpha/beta heterodimers. Cleaved into an alpha and beta chain by autocatalysis; this activates the enzyme. The N-terminal residue of the beta subunit is responsible for the nucleophile hydrolase activity.

It carries out the reaction N(4)-(beta-N-acetyl-D-glucosaminyl)-L-asparagine + H2O = N-acetyl-beta-D-glucosaminylamine + L-aspartate + H(+). In terms of biological role, cleaves the GlcNAc-Asn bond which joins oligosaccharides to the peptide of asparagine-linked glycoproteins. The chain is Putative N(4)-(beta-N-acetylglucosaminyl)-L-asparaginase CG1827 from Drosophila melanogaster (Fruit fly).